Reading from the N-terminus, the 360-residue chain is Insulin gene enhancer protein ISL-2 (360 aa).

2 consecutive LIM zinc-binding domains span residues 25–86 (AMCV…RLFG) and 87–149 (IKCA…LLER). The segment at 151–177 (AAGSPRSPGPLPGTPPGLHLPDAGSGQ) is disordered. Serine 154 and serine 157 each carry phosphoserine. A DNA-binding region (homeobox) is located at residues 192–251 (TTRVRTVLNEKQLHTLRTCYAANPRPDALMKEQLVEMTGLSPRVIRVWFQNKRCKDKKKS). The interval 273 to 302 (GTLLVAGSPSAHENAVQGSAVEVQTYQPPW) is LIM-binding domain (LID). Phosphoserine is present on serine 280. Low complexity predominate over residues 328 to 337 (SGSLGNSSGS). Positions 328–360 (SGSLGNSSGSDVTSLSSQLPDTPNSMVPSPVET) are disordered. Over residues 338-360 (DVTSLSSQLPDTPNSMVPSPVET) the composition is skewed to polar residues.

Interacts with LHX4.

Its subcellular location is the nucleus. Transcriptional factor that defines subclasses of motoneurons that segregate into columns in the spinal cord and select distinct axon pathways. The sequence is that of Insulin gene enhancer protein ISL-2 (Isl2) from Rattus norvegicus (Rat).